The primary structure comprises 39 residues: Photosystem II reaction center protein Psb30 (39 aa).

A helical transmembrane segment spans residues 12 to 32 (IFQLTFVALIMLAGPFVIFLL).

Belongs to the Psb30/Ycf12 family. PSII is composed of 1 copy each of membrane proteins PsbA, PsbB, PsbC, PsbD, PsbE, PsbF, PsbH, PsbI, PsbJ, PsbK, PsbL, PsbM, PsbT, PsbX, PsbY, PsbZ, Psb30/Ycf12, peripheral proteins PsbO, CyanoQ (PsbQ), PsbU, PsbV and a large number of cofactors. It forms dimeric complexes.

It is found in the cellular thylakoid membrane. Its function is as follows. A core subunit of photosystem II (PSII), probably helps stabilize the reaction center. The protein is Photosystem II reaction center protein Psb30 of Microcystis aeruginosa (strain NIES-843 / IAM M-2473).